A 158-amino-acid polypeptide reads, in one-letter code: C-type lectin BfL-2 (158 aa).

An N-terminal signal peptide occupies residues 1 to 21 (MGHFTFIGLCLLAMFLSLSGA). 4 disulfides stabilise this stretch: C26-C37, C54-C154, C61-C156, and C129-C146. A C-type lectin domain is found at 33-155 (KNGLCYKVFS…CETLHPFICQ (123 aa)). The short motif at 119 to 121 (EPN) is the Mannose-binding element. N121 carries an N-linked (GlcNAc...) asparagine glycan. 3 residues coordinate Ca(2+): E127, N142, and D143.

The protein belongs to the true venom lectin family. As to quaternary structure, homodimer; non-covalently linked. As to expression, expressed by the venom gland.

It localises to the secreted. Its function is as follows. Mannose-binding lectin which recognizes specific carbohydrate structures and agglutinates a variety of animal cells by binding to cell-surface glycoproteins and glycolipids. May be a calcium-dependent lectin. The sequence is that of C-type lectin BfL-2 from Bungarus fasciatus (Banded krait).